Consider the following 522-residue polypeptide: Amine oxidase [flavin-containing] (522 aa).

Residues 1–492 (MTANAYDVIV…WERNLPSVGG (492 aa)) are Cytoplasmic-facing. Residue C398 is modified to S-8alpha-FAD cysteine. The chain crosses the membrane as a helical; Anchor for type IV membrane protein span at residues 493-513 (FLKFMGVSSFLAAATAAGLVA). At 514–522 (CKKGLLPRC) the chain is on the mitochondrial intermembrane side.

It belongs to the flavin monoamine oxidase family. Monomer, homo- or heterodimer (containing two subunits of similar size). Each subunit contains a covalently bound flavin. Enzymatically active as monomer. FAD serves as cofactor. As to expression, strongest expression in brain and intestine, followed by liver, heart and gill. Little expression in spleen, eye or muscle. In brain, highest activity in noradrenergic and serotonergic cell groups and those of the habenulointerpeduncular pathway; moderate levels in dopaminergic cell clusters.

The protein localises to the mitochondrion outer membrane. It carries out the reaction a secondary aliphatic amine + O2 + H2O = a primary amine + an aldehyde + H2O2. The catalysed reaction is a primary methyl amine + O2 + H2O = an aldehyde + H2O2 + NH4(+). It catalyses the reaction serotonin + O2 + H2O = (5-hydroxyindol-3-yl)acetaldehyde + H2O2 + NH4(+). The enzyme catalyses 2-phenylethylamine + O2 + H2O = 2-phenylacetaldehyde + H2O2 + NH4(+). It carries out the reaction tyramine + O2 + H2O = (4-hydroxyphenyl)acetaldehyde + H2O2 + NH4(+). The catalysed reaction is dopamine + O2 + H2O = 3,4-dihydroxyphenylacetaldehyde + H2O2 + NH4(+). It catalyses the reaction (R)-adrenaline + O2 + H2O = (R)-3,4-dihydroxymandelaldehyde + methylamine + H2O2. The enzyme catalyses (R)-noradrenaline + O2 + H2O = (R)-3,4-dihydroxymandelaldehyde + H2O2 + NH4(+). It carries out the reaction kynuramine + O2 + H2O = 3-(2-aminophenyl)-3-oxopropanal + H2O2 + NH4(+). The catalysed reaction is tryptamine + O2 + H2O = indole-3-acetaldehyde + H2O2 + NH4(+). Inhibited by both clorgyline (selective MAOA inhibitor) and deprenyl (selective MAOB inhibitor). Functionally, catalyzes the oxidative deamination of biogenic and xenobiotic amines and has important functions in the metabolism of neuroactive and vasoactive amines in the central nervous system and peripheral tissues. Preferentially oxidizes serotonin and tyramine. Also catalyzes the oxidative deamination of kynuramine to 3-(2-aminophenyl)-3-oxopropanal that can spontaneously condense to 4-hydroxyquinoline. The protein is Amine oxidase [flavin-containing] of Danio rerio (Zebrafish).